A 97-amino-acid polypeptide reads, in one-letter code: Citrate lyase acyl carrier protein (97 aa).

Residue Ser14 is modified to O-(phosphoribosyl dephospho-coenzyme A)serine.

The protein belongs to the CitD family. Oligomer with a subunit composition of (alpha,beta,gamma)6.

Its subcellular location is the cytoplasm. Its function is as follows. Covalent carrier of the coenzyme of citrate lyase. The chain is Citrate lyase acyl carrier protein from Oenococcus oeni (strain ATCC BAA-331 / PSU-1).